We begin with the raw amino-acid sequence, 304 residues long: Glycosyltransferase AglE (304 aa).

This sequence belongs to the glycosyltransferase 2 family.

Its subcellular location is the cell membrane. It participates in cell surface structure biogenesis; S-layer biogenesis. Involved in the assembly of a N-linked pentasaccharide that decorates the S-layer glycoprotein and flagellins. Catalyzes the addition to the dolichol phosphate carrier of the hexuronic acid found at position 4 of the pentasaccharide. The protein is Glycosyltransferase AglE (aglE) of Haloferax volcanii (strain ATCC 29605 / DSM 3757 / JCM 8879 / NBRC 14742 / NCIMB 2012 / VKM B-1768 / DS2) (Halobacterium volcanii).